The following is a 143-amino-acid chain: Sperm mitochondrial-associated cysteine-rich protein (143 aa).

Ser37, Ser44, and Ser110 each carry phosphoserine. The interval 101-143 (CCSSENKTESDSDTSGQTLEKGSQSPQSPPGAQGNWNQKKSNK) is disordered. A compositionally biased stretch (polar residues) spans 113–126 (DTSGQTLEKGSQSP). At Ser128 the chain carries Phosphoserine. Residues 134–143 (GNWNQKKSNK) show a composition bias toward polar residues.

In terms of tissue distribution, testis. Is selectively expressed in the spermatids of seminiferous tubules.

It localises to the cytoplasm. The protein localises to the mitochondrion membrane. Functionally, involved in sperm motility. Its absence is associated with genetic background dependent male infertility. Infertility may be due to reduced sperm motility in the female reproductive tract and inability to penetrate the oocyte zona pellucida. In Mus musculus (Mouse), this protein is Sperm mitochondrial-associated cysteine-rich protein (Smcp).